Here is a 55-residue protein sequence, read N- to C-terminus: ATP synthase F(0) complex subunit 8 (55 aa).

Residues Leu-4–Ile-24 traverse the membrane as a helical segment. The tract at residues Thr-34 to His-55 is disordered.

This sequence belongs to the ATPase protein 8 family. Component of the ATP synthase complex composed at least of ATP5F1A/subunit alpha, ATP5F1B/subunit beta, ATP5MC1/subunit c (homooctomer), MT-ATP6/subunit a, MT-ATP8/subunit 8, ATP5ME/subunit e, ATP5MF/subunit f, ATP5MG/subunit g, ATP5MK/subunit k, ATP5MJ/subunit j, ATP5F1C/subunit gamma, ATP5F1D/subunit delta, ATP5F1E/subunit epsilon, ATP5PF/subunit F6, ATP5PB/subunit b, ATP5PD/subunit d, ATP5PO/subunit OSCP. ATP synthase complex consists of a soluble F(1) head domain (subunits alpha(3) and beta(3)) - the catalytic core - and a membrane F(0) domain - the membrane proton channel (subunits c, a, 8, e, f, g, k and j). These two domains are linked by a central stalk (subunits gamma, delta, and epsilon) rotating inside the F1 region and a stationary peripheral stalk (subunits F6, b, d, and OSCP).

It localises to the mitochondrion membrane. Its function is as follows. Subunit 8, of the mitochondrial membrane ATP synthase complex (F(1)F(0) ATP synthase or Complex V) that produces ATP from ADP in the presence of a proton gradient across the membrane which is generated by electron transport complexes of the respiratory chain. ATP synthase complex consist of a soluble F(1) head domain - the catalytic core - and a membrane F(1) domain - the membrane proton channel. These two domains are linked by a central stalk rotating inside the F(1) region and a stationary peripheral stalk. During catalysis, ATP synthesis in the catalytic domain of F(1) is coupled via a rotary mechanism of the central stalk subunits to proton translocation. In vivo, can only synthesize ATP although its ATP hydrolase activity can be activated artificially in vitro. Part of the complex F(0) domain. This is ATP synthase F(0) complex subunit 8 from Oncorhynchus mykiss (Rainbow trout).